Here is a 434-residue protein sequence, read N- to C-terminus: Methylenetetrahydrofolate--tRNA-(uracil-5-)-methyltransferase TrmFO (434 aa).

FAD is bound at residue 9–14 (GGGLAG).

This sequence belongs to the MnmG family. TrmFO subfamily. FAD is required as a cofactor.

Its subcellular location is the cytoplasm. It carries out the reaction uridine(54) in tRNA + (6R)-5,10-methylene-5,6,7,8-tetrahydrofolate + NADH + H(+) = 5-methyluridine(54) in tRNA + (6S)-5,6,7,8-tetrahydrofolate + NAD(+). It catalyses the reaction uridine(54) in tRNA + (6R)-5,10-methylene-5,6,7,8-tetrahydrofolate + NADPH + H(+) = 5-methyluridine(54) in tRNA + (6S)-5,6,7,8-tetrahydrofolate + NADP(+). In terms of biological role, catalyzes the folate-dependent formation of 5-methyl-uridine at position 54 (M-5-U54) in all tRNAs. The protein is Methylenetetrahydrofolate--tRNA-(uracil-5-)-methyltransferase TrmFO of Geobacter sulfurreducens (strain ATCC 51573 / DSM 12127 / PCA).